The sequence spans 233 residues: Counting factor-associated protein A (233 aa).

The first 21 residues, 1–21, serve as a signal peptide directing secretion; sequence MKLLNSLILLVLTCLVSSINT. N-linked (GlcNAc...) asparagine glycosylation is found at asparagine 37 and asparagine 189.

The protein localises to the secreted. This chain is Counting factor-associated protein A (cfaA), found in Dictyostelium discoideum (Social amoeba).